The following is a 273-amino-acid chain: Progestin and adipoQ receptor family member 4 (273 aa).

Transmembrane regions (helical) follow at residues 52 to 72 (IYTH…TMPW), 79 to 99 (GWLG…SVLY), 115 to 135 (LLAL…LPII), 147 to 167 (PAAL…ALTA), 185 to 205 (LLVF…SLPC), and 245 to 265 (LLSV…LLWA).

This sequence belongs to the ADIPOR family. Interacts with CERS2 and CERS5; the interaction regulates CERS2 and CERS5 stabilities and activities and is inhibited in presence of ceramides. In terms of tissue distribution, relatively widely expressed in a range of tissues. Expressed in subcutaneous white adipose tissue.

Its subcellular location is the golgi apparatus membrane. Plays a role in maintaining adipose tissue function through the regulation of ceramide levels. Mediates the stability of ceramide synthetases, CERS2 and CERS5, and their activities. In Homo sapiens (Human), this protein is Progestin and adipoQ receptor family member 4.